Reading from the N-terminus, the 626-residue chain is Serine/threonine-protein kinase PknH (626 aa).

At 1–403 the chain is on the cytoplasmic side; it reads MSDAQDSRVG…QTPRKTNPWP (403 aa). A Protein kinase domain is found at 16 to 276; sequence YHLKRLLGRG…DLALAAHEAL (261 aa). Residues 22-30 and K45 each bind ATP; that span reads LGRGGMGEV. D139 acts as the Proton acceptor in catalysis. T170 carries the post-translational modification Phosphothreonine. Residues 292 to 396 form a disordered region; it reads QESTLPAPPK…GGPSPWAQTP (105 aa). Pro residues-rich tracts occupy residues 297–308 and 316–342; these read PAPPKPVPPPTM and RQPP…PAQP. The segment covering 343 to 355 has biased composition (low complexity); the sequence is GPAGQRPGPTGQP. A helical membrane pass occupies residues 404–424; sequence LVAGAAAVVLVLVLGAIGIWI. Topologically, residues 425 to 626 are extracellular; the sequence is AIRPKPVQPP…AKIVDKVNKE (202 aa). Disulfide bonds link C482-C545 and C587-C604.

This sequence belongs to the protein kinase superfamily. Ser/Thr protein kinase family. The cofactor is a divalent metal cation. Post-translationally, autophosphorylated on threonine and serine residues. Dephosphorylated by PstP.

The protein localises to the cell membrane. It catalyses the reaction L-seryl-[protein] + ATP = O-phospho-L-seryl-[protein] + ADP + H(+). It carries out the reaction L-threonyl-[protein] + ATP = O-phospho-L-threonyl-[protein] + ADP + H(+). With respect to regulation, inhibited by the kinase inhibitors staurosporine and H-7. May regulate bacterial growth in response to external signals to facilitate adaptation to the host environment. In vitro, phosphorylates several substrates such as EmbR, DevR (DosR), DacB1 and Rv0681. The polypeptide is Serine/threonine-protein kinase PknH (pknH) (Mycobacterium tuberculosis (strain ATCC 25618 / H37Rv)).